A 110-amino-acid chain; its full sequence is Movement protein TGB2 (110 aa).

The Cytoplasmic portion of the chain corresponds to 1 to 10; sequence MSGAHHLTPP. A helical transmembrane segment spans residues 11-34; it reads TDYGKPVLAASIGISLALLVYTAT. Over 35–76 the chain is Lumenal; sequence RSTLPHVGDNLHALPHGGRYVDGTKSISYFSPSASKTRDPFP. The chain crosses the membrane as a helical span at residues 77-92; that stretch reads FAFLLILTLSGLILLL. At 93-110 the chain is on the cytoplasmic side; that stretch reads SRRRSNPHSCPSCGTPHA.

It belongs to the Tymovirales TGBp2 protein family.

It is found in the host endoplasmic reticulum membrane. Its function is as follows. Plays a role in viral cell-to-cell propagation, by facilitating genome transport to neighboring plant cells through plasmosdesmata,. The protein is Movement protein TGB2 of Plantago asiatica (P1AMV).